A 532-amino-acid polypeptide reads, in one-letter code: Glucose-6-phosphate isomerase (532 aa).

Glu-322 functions as the Proton donor in the catalytic mechanism. Active-site residues include His-351 and Lys-457.

The protein belongs to the GPI family.

The protein localises to the cytoplasm. It catalyses the reaction alpha-D-glucose 6-phosphate = beta-D-fructose 6-phosphate. The protein operates within carbohydrate biosynthesis; gluconeogenesis. Its pathway is carbohydrate degradation; glycolysis; D-glyceraldehyde 3-phosphate and glycerone phosphate from D-glucose: step 2/4. Its function is as follows. Catalyzes the reversible isomerization of glucose-6-phosphate to fructose-6-phosphate. This is Glucose-6-phosphate isomerase from Synechococcus sp. (strain JA-3-3Ab) (Cyanobacteria bacterium Yellowstone A-Prime).